We begin with the raw amino-acid sequence, 132 residues long: Agouti-signaling protein (132 aa).

The first 22 residues, M1 to S22, serve as a signal peptide directing secretion. A glycan (N-linked (GlcNAc...) asparagine) is linked at N39. The segment at I62–P85 is disordered. A compositionally biased stretch (basic and acidic residues) spans K65–M79. Intrachain disulfides connect C93–C108, C100–C114, C107–C125, C111–C132, and C116–C123. The Agouti domain occupies C93 to C132.

Widely expressed at low levels. Highly expressed in the skin. Expressed in adipose tissue.

It localises to the secreted. In terms of biological role, involved in the regulation of melanogenesis. The binding of ASP to MC1R precludes alpha-MSH initiated signaling and thus blocks production of cAMP, leading to a down-regulation of eumelanogenesis (brown/black pigment) and thus increasing synthesis of pheomelanin (yellow/red pigment). In higher primates, agouti may affect the quality of hair pigmentation rather than its pattern of deposition. Could well play a role in neuroendocrine aspects of melanocortin action. May have some functional role in regulating the lipid metabolism with adipocytes. The sequence is that of Agouti-signaling protein (ASIP) from Homo sapiens (Human).